A 526-amino-acid chain; its full sequence is GMP synthase [glutamine-hydrolyzing] (526 aa).

One can recognise a Glutamine amidotransferase type-1 domain in the interval 8–208 (CILIIDFGSQ…AVDICRCEVT (201 aa)). C85 (nucleophile) is an active-site residue. Active-site residues include H182 and E184. A GMPS ATP-PPase domain is found at 209 to 401 (WKPVYIVKNI…LGLPLNVVNQ (193 aa)). 236–242 (SGGIDSL) contacts ATP.

Homodimer.

It carries out the reaction XMP + L-glutamine + ATP + H2O = GMP + L-glutamate + AMP + diphosphate + 2 H(+). It functions in the pathway purine metabolism; GMP biosynthesis; GMP from XMP (L-Gln route): step 1/1. Catalyzes the synthesis of GMP from XMP. The chain is GMP synthase [glutamine-hydrolyzing] from Blochmanniella floridana.